A 668-amino-acid chain; its full sequence is DNA mismatch repair protein MutL (668 aa).

This sequence belongs to the DNA mismatch repair MutL/HexB family.

This protein is involved in the repair of mismatches in DNA. It is required for dam-dependent methyl-directed DNA mismatch repair. May act as a 'molecular matchmaker', a protein that promotes the formation of a stable complex between two or more DNA-binding proteins in an ATP-dependent manner without itself being part of a final effector complex. The polypeptide is DNA mismatch repair protein MutL (Limosilactobacillus reuteri (strain DSM 20016) (Lactobacillus reuteri)).